The following is a 145-amino-acid chain: Nucleoside diphosphate kinase (145 aa).

Residues K11, F59, R87, T93, R104, and N114 each coordinate ATP. Residue H117 is the Pros-phosphohistidine intermediate of the active site.

This sequence belongs to the NDK family. Mg(2+) serves as cofactor.

It localises to the cytoplasm. The catalysed reaction is a 2'-deoxyribonucleoside 5'-diphosphate + ATP = a 2'-deoxyribonucleoside 5'-triphosphate + ADP. It carries out the reaction a ribonucleoside 5'-diphosphate + ATP = a ribonucleoside 5'-triphosphate + ADP. Functionally, major role in the synthesis of nucleoside triphosphates other than ATP. The ATP gamma phosphate is transferred to the NDP beta phosphate via a ping-pong mechanism, using a phosphorylated active-site intermediate. This is Nucleoside diphosphate kinase from Sulfolobus acidocaldarius (strain ATCC 33909 / DSM 639 / JCM 8929 / NBRC 15157 / NCIMB 11770).